Consider the following 300-residue polypeptide: Manganese-binding lipoprotein MntA (300 aa).

Positions 1-19 (MKKVCFSFVIMVIALIAAG) are cleaved as a signal peptide. Cys-20 carries the N-palmitoyl cysteine lipid modification. Cys-20 carries the S-diacylglycerol cysteine lipid modification. Residues His-68, His-130, Glu-196, and Asp-271 each contribute to the Mn(2+) site.

The protein belongs to the bacterial solute-binding protein 9 family.

It is found in the cell membrane. Its function is as follows. Probably part of ATP-binding cassette (ABC) transport system MntABCD involved in manganese import. Binds manganese and delivers it to the membrane permease for translocation into the cytoplasm. This Halalkalibacterium halodurans (strain ATCC BAA-125 / DSM 18197 / FERM 7344 / JCM 9153 / C-125) (Bacillus halodurans) protein is Manganese-binding lipoprotein MntA (mntA).